The following is a 549-amino-acid chain: Probable protein kinase UbiB (549 aa).

A Protein kinase domain is found at 123–501 (NFDDTPLASA…QQKAHKSNYL (379 aa)). Residues 129–137 (LASASISQV) and Lys-152 contribute to the ATP site. Asp-287 functions as the Proton acceptor in the catalytic mechanism. 2 consecutive transmembrane segments (helical) span residues 498-518 (SNYL…LFSQ) and 520-540 (ATLW…LLGW).

It belongs to the ABC1 family. UbiB subfamily.

The protein localises to the cell inner membrane. The protein operates within cofactor biosynthesis; ubiquinone biosynthesis [regulation]. Its function is as follows. Is probably a protein kinase regulator of UbiI activity which is involved in aerobic coenzyme Q (ubiquinone) biosynthesis. The sequence is that of Probable protein kinase UbiB from Shewanella loihica (strain ATCC BAA-1088 / PV-4).